A 938-amino-acid chain; its full sequence is Cyclin-dependent kinase-like 5 (938 aa).

One can recognise a Protein kinase domain in the interval 13-297 (FEILGVVGEG…TEQCLNHPTF (285 aa)). Residues 19-27 (VGEGAYGVV) and Lys42 contribute to the ATP site. Asp135 (proton acceptor) is an active-site residue. 4 disordered regions span residues 298–348 (QTQR…DIQN), 382–566 (KTYQ…RHSK), 646–865 (SPQP…LTAQ), and 877–938 (HPLS…KWKQ). 2 stretches are compositionally biased toward polar residues: residues 319-331 (ESST…QSTK) and 382-402 (KTYQ…NNNI). Ser407 is modified (phosphoserine). Over residues 407-417 (SPKEAKSKTEF) the composition is skewed to basic and acidic residues. 3 stretches are compositionally biased toward polar residues: residues 434-462 (LKSS…QPSE), 473-482 (IPQSSRSPSY), and 494-548 (DSKS…SGRN). Ser479 bears the Phosphoserine mark. 2 stretches are compositionally biased toward basic and acidic residues: residues 549 to 559 (NRNEGTLDSRR) and 679 to 704 (QKSE…RHLY). Phosphoserine is present on Ser720. The segment covering 728–748 (HENNVSTRVSSLPSDSSSGTN) has biased composition (polar residues). Ser761 bears the Phosphoserine mark. Composition is skewed to basic and acidic residues over residues 769-778 (DQLKEKEKQG) and 817-827 (RPKEWRPEKLS). A compositionally biased stretch (polar residues) spans 880–891 (SQATGGSSNIRQ).

This sequence belongs to the protein kinase superfamily. CMGC Ser/Thr protein kinase family. CDC2/CDKX subfamily. In terms of assembly, interacts with MECP2. Post-translationally, autophosphorylated.

It is found in the nucleus. It localises to the cytoplasm. Its subcellular location is the cytoskeleton. The protein resides in the cilium basal body. The protein localises to the microtubule organizing center. It is found in the centrosome. It catalyses the reaction L-seryl-[protein] + ATP = O-phospho-L-seryl-[protein] + ADP + H(+). The enzyme catalyses L-threonyl-[protein] + ATP = O-phospho-L-threonyl-[protein] + ADP + H(+). Mediates phosphorylation of MECP2. May regulate ciliogenesis. This is Cyclin-dependent kinase-like 5 from Mus musculus (Mouse).